The sequence spans 587 residues: Serine/threonine-protein phosphatase 2A 65 kDa regulatory subunit A gamma isoform (587 aa).

Position 2 is an N-acetylserine (Ser-2). HEAT repeat units lie at residues 2–42 (SMVD…ALGE), 44–80 (RTRK…YVGG), 81–119 (VEYA…QMRE), 158–194 (DVLK…AATI), 197–235 (AHLK…LLEP), 236–274 (QDCV…AVGP), 276–313 (PTRT…ILNP), 314–352 (ELAI…VLGK), 353–391 (DATI…VIGI), 393–430 (LLSQ…QLGV), 432–469 (FFDE…EFGP), 470–508 (EWAM…VMGS), 509–547 (EITC…IVDQ), and 549–586 (VVEN…VMMS).

It belongs to the phosphatase 2A regulatory subunit A family. PP2A consists of a common heterodimeric core enzyme, composed of a 36 kDa catalytic subunit (subunit C) and a 65 kDa constant regulatory subunit (subunit A), that associates with a variety of regulatory subunits such as subunits B (the R2/B/PR55/B55, R3/B''/PR72/PR130/PR59 and R5/B'/B56 families). Interacts with CHIP. Interacts with SRK2E/OST1. Ubiquitinated. CHIP-mediated ubiquitination enhances phosphatase activity after an abiotic stress such as low temperature or darkness. Expressed ubiquitously at stable levels. However, higher protein levels in roots and flowers (at protein level).

Its subcellular location is the cytoplasm. It is found in the cytosol. The protein resides in the nucleus. In terms of biological role, the A subunit of protein phosphatase 2A serves as a scaffolding molecule to coordinate the assembly of the catalytic subunit and a variable regulatory B subunit. Involved during developmental process such as seedling and floral developments. Seems to act as a negative regulator of PP2A catalytic activity. This is Serine/threonine-protein phosphatase 2A 65 kDa regulatory subunit A gamma isoform (PP2AA3) from Arabidopsis thaliana (Mouse-ear cress).